The following is a 355-amino-acid chain: Peptide chain release factor 1 (355 aa).

An N5-methylglutamine modification is found at Gln233. The span at Glu280 to Arg293 shows a compositional bias: basic and acidic residues. The interval Glu280 to Tyr308 is disordered.

It belongs to the prokaryotic/mitochondrial release factor family. Post-translationally, methylated by PrmC. Methylation increases the termination efficiency of RF1.

It localises to the cytoplasm. Peptide chain release factor 1 directs the termination of translation in response to the peptide chain termination codons UAG and UAA. This is Peptide chain release factor 1 from Rickettsia felis (strain ATCC VR-1525 / URRWXCal2) (Rickettsia azadi).